A 476-amino-acid polypeptide reads, in one-letter code: Protein transport protein SEC61 subunit alpha (476 aa).

The Cytoplasmic segment spans residues 1–33 (MSSLRFLDLVKPFVPFLPEVQQPETKIPFNQKL). The helical transmembrane segment at 34 to 54 (MWTGLTLLIFLVMSQMPLYGI) threads the bilayer. Topologically, residues 55–76 (VSSDTSDPLYWLRMMMASNRGT) are lumenal. Residues 77-97 (LMELGITPIISSGMVFQLLAG) traverse the membrane as a helical segment. The Cytoplasmic portion of the chain corresponds to 98-119 (THMIDVNLDLKADRELYQTAQK). A helical membrane pass occupies residues 120–140 (LFAVILSIGTATVYVFTGLYG). Residues 141–146 (PPSDLG) are Lumenal-facing. Residues 147–167 (AGIVFLLILQLVVAGMIVILL) form a helical membrane-spanning segment. The Cytoplasmic segment spans residues 168-246 (DELLQKGYGL…YRQNLPNIMN (79 aa)). Residues 247 to 267 (LLATLVVFAAVIYLQGFRVEI) form a helical membrane-spanning segment. The Lumenal portion of the chain corresponds to 268–361 (PVKSSRQRGA…KDALLDPIHT (94 aa)). Residues 362–382 (AVYIAYMLTACAVFSKTWIEV) form a helical membrane-spanning segment. Over 383-415 (SGSSPRDVAKQLKDQGLVMAGHREQSMYKELKR) the chain is Cytoplasmic. A helical membrane pass occupies residues 416–434 (IIPTAAAFGGACIGALSVA). Residues 435-440 (SDLMGA) are Lumenal-facing. Residues 441–458 (LGSGTGTLLAVTIIYGYF) traverse the membrane as a helical segment. Residues 459–476 (EIAAKEGDLQGMKGMIMG) lie on the Cytoplasmic side of the membrane.

This sequence belongs to the SecY/SEC61-alpha family. As to quaternary structure, heterotrimeric complex composed of SEC61-alpha, SEC61-beta and SEC61-gamma.

The protein localises to the endoplasmic reticulum membrane. Functionally, appears to play a crucial role in the insertion of secretory and membrane polypeptides into the ER. It is required for assembly of membrane and secretory proteins and is essential for cell growth. It interacts with other membrane proteins required for protein translocation. Upon binding to SEC62/63 complex, secretory precursor polypeptides may engage SEC61 to begin membrane penetration event. A cycle of assembly and disassembly of SEC62/63 from SEC61 may govern the activity of the translocase. This Neurospora crassa (strain ATCC 24698 / 74-OR23-1A / CBS 708.71 / DSM 1257 / FGSC 987) protein is Protein transport protein SEC61 subunit alpha (sec-61).